A 271-amino-acid polypeptide reads, in one-letter code: Proteasome inhibitor PI31 subunit (271 aa).

An N-acetylalanine modification is found at alanine 2. Residues 2–150 (AGLEVLFASA…PIHEQWEKVR (149 aa)) are important for homodimerization and interaction with FBXO7. Phosphoserine occurs at positions 153 and 189. The residue at position 205 (arginine 205) is an Omega-N-methylarginine. At arginine 219 the chain carries Asymmetric dimethylarginine. Residues 221 to 271 (LIDPSSGLPNRLPPGAVPPGARFDPFGPIGTSPSGPNPDHLPPPGYDDMYL) are disordered. Residue arginine 231 is modified to Omega-N-methylarginine. Serine 252 bears the Phosphoserine mark. The span at 255-265 (GPNPDHLPPPG) shows a compositional bias: pro residues.

The protein belongs to the proteasome inhibitor PI31 family. As to quaternary structure, monomer and homodimer. Interacts with FBXO7.

It is found in the cytoplasm. Its subcellular location is the endoplasmic reticulum. Plays an important role in control of proteasome function. Inhibits the hydrolysis of protein and peptide substrates by the 20S proteasome. Also inhibits the activation of the proteasome by the proteasome regulatory proteins PA700 and PA28. In Rattus norvegicus (Rat), this protein is Proteasome inhibitor PI31 subunit (Psmf1).